Reading from the N-terminus, the 106-residue chain is Putative membrane protein insertion efficiency factor (106 aa).

The protein belongs to the UPF0161 family.

The protein localises to the cell inner membrane. In terms of biological role, could be involved in insertion of integral membrane proteins into the membrane. In Acinetobacter baylyi (strain ATCC 33305 / BD413 / ADP1), this protein is Putative membrane protein insertion efficiency factor.